Here is a 464-residue protein sequence, read N- to C-terminus: 2-oxoadipate dioxygenase/decarboxylase (464 aa).

3 residues coordinate 2-oxoadipate: histidine 70, arginine 74, and histidine 226. Fe(2+) is bound at residue histidine 70. 2 residues coordinate Fe(2+): histidine 226 and glutamate 294. A 2-oxoadipate-binding site is contributed by valine 402.

This sequence belongs to the 2-oxoadipate dioxygenase/decarboxylase family. The cofactor is Fe(2+).

The catalysed reaction is 2-oxoadipate + O2 = (R)-2-hydroxyglutarate + CO2. The protein operates within amino-acid degradation. Its activity is regulated as follows. Inhibited by EDTA. Functionally, catalyzes the decarboxylation and hydroxylation of 2-oxoadipate (2OA) to form D-2-hydroxyglutarate (D-2-HGA). Is specific for 2-oxoadipate. Is involved in a D-lysine catabolic pathway. The polypeptide is 2-oxoadipate dioxygenase/decarboxylase (Pseudomonas putida (strain ATCC 47054 / DSM 6125 / CFBP 8728 / NCIMB 11950 / KT2440)).